Reading from the N-terminus, the 167-residue chain is Elafin (167 aa).

The N-terminal stretch at 1-21 (MRSRSFLVLVVVFLICGTLVA) is a signal peptide. A propeptide spanning residues 22-70 (QAAGRIRRPKGKGTKKILALVKGQGPVRGKDQVKGQGPVKGQDLGKSQD) is cleaved from the precursor. A run of 12 repeats spans residues 44 to 49 (GQGPVR), 50 to 55 (GKDQVK), 56 to 61 (GQGPVK), 62 to 67 (GQDLGK), 68 to 73 (SQDPVK), 74 to 79 (AQLPDK), 80 to 85 (GQDLGK), 86 to 91 (GEDSVK), 92 to 97 (GQDPFK), 98 to 103 (AQLPDK), 104 to 109 (LQDPVK), and 110 to 115 (AQPAIK). Positions 44-115 (GQGPVRGKDQ…DPVKAQPAIK (72 aa)) are 12 X 6 AA tandem repeats of [GSAL]-[QEK]-[DGLP]-[APSLQ]-[VGDFI]-[KR]. The tract at residues 46–104 (GPVRGKDQVKGQGPVKGQDLGKSQDPVKAQLPDKGQDLGKGEDSVKGQDPFKAQLPDKL) is disordered. The 2 X tandem repeats of SVP-1 like motif stretch occupies residues 78-126 (DKGQDLGKGEDSVKGQDPFKAQLPDKLQDPVKAQPAIKRLILLTKPGSC). Residues 79–91 (KGQDLGKGEDSVK) are compositionally biased toward basic and acidic residues. SVP-1 clotting repeat units lie at residues 80 to 101 (GQDL…AQLP) and 104 to 126 (LQDP…PGSC). The WAP domain occupies 119–167 (LLTKPGSCPRILIRCLMVNPPNRCLSDAQCPGLKKCCEGFCGKACMDPK). 4 disulfide bridges follow: Cys126-Cys155, Cys133-Cys159, Cys142-Cys154, and Cys148-Cys163.

Trachea and large intestine.

Functionally, neutrophil and pancreatic elastase-specific inhibitor of skin. It may prevent elastase-mediated tissue proteolysis. The sequence is that of Elafin from Sus scrofa (Pig).